Reading from the N-terminus, the 413-residue chain is Multifunctional CCA protein (413 aa).

Positions 8 and 11 each coordinate ATP. Positions 8 and 11 each coordinate CTP. Residues D21 and D23 each contribute to the Mg(2+) site. Residues R91, R143, and R146 each coordinate ATP. Positions 91, 143, and 146 each coordinate CTP. One can recognise an HD domain in the interval 232–333 (TGVHVMMVID…VRLLERADAL (102 aa)).

Belongs to the tRNA nucleotidyltransferase/poly(A) polymerase family. Bacterial CCA-adding enzyme type 1 subfamily. As to quaternary structure, monomer. Can also form homodimers and oligomers. Mg(2+) serves as cofactor. Ni(2+) is required as a cofactor.

It catalyses the reaction a tRNA precursor + 2 CTP + ATP = a tRNA with a 3' CCA end + 3 diphosphate. It carries out the reaction a tRNA with a 3' CCA end + 2 CTP + ATP = a tRNA with a 3' CCACCA end + 3 diphosphate. Functionally, catalyzes the addition and repair of the essential 3'-terminal CCA sequence in tRNAs without using a nucleic acid template. Adds these three nucleotides in the order of C, C, and A to the tRNA nucleotide-73, using CTP and ATP as substrates and producing inorganic pyrophosphate. tRNA 3'-terminal CCA addition is required both for tRNA processing and repair. Also involved in tRNA surveillance by mediating tandem CCA addition to generate a CCACCA at the 3' terminus of unstable tRNAs. While stable tRNAs receive only 3'-terminal CCA, unstable tRNAs are marked with CCACCA and rapidly degraded. The sequence is that of Multifunctional CCA protein from Burkholderia mallei (strain NCTC 10247).